Consider the following 381-residue polypeptide: Neuropeptide Y receptor type 2 (381 aa).

A disordered region spans residues 1–35 (MGPIGTEADENQTVEEMKVEQYGPQTTPRGELVPD). The Extracellular segment spans residues 1–51 (MGPIGTEADENQTVEEMKVEQYGPQTTPRGELVPDPEPELIDSTKLIEVQV). An N-linked (GlcNAc...) asparagine glycan is attached at Asn11. Residues 52–72 (VLILAYCSIILLGVIGNSLVI) traverse the membrane as a helical segment. At 73 to 86 (HVVIKFKSMRTVTN) the chain is on the cytoplasmic side. A helical membrane pass occupies residues 87-107 (FFIANLAVADLVVNTLCLPFT). At 108–124 (LTYTLMGEWKMGPVLCH) the chain is on the extracellular side. An intrachain disulfide couples Cys123 to Cys203. A helical transmembrane segment spans residues 125–145 (LVPYAQGLAVQVSTITLTVIA). Residues 146–165 (LDRHRCIVYHLESKISKRIS) lie on the Cytoplasmic side of the membrane. The chain crosses the membrane as a helical span at residues 166–186 (FLIIGLAWGISALLASPLAIF). Over 187–216 (REYSLIEIIPDFEIVACTEKWPGEEKSIYG) the chain is Extracellular. Residues 217 to 237 (TVYSLSSLLILYVLPLGIISF) form a helical membrane-spanning segment. Over 238–268 (SYTRIWSKLKSHVSPGAANDHYHQRRQKTTK) the chain is Cytoplasmic. The chain crosses the membrane as a helical span at residues 269–289 (MLVCVVVVFAVSWLPLHAFQL). Topologically, residues 290-304 (AVDIDSHVLDLKEYK) are extracellular. Residues 305 to 325 (LIFTVFHIIAMCSTFANPLLY) form a helical membrane-spanning segment. Topologically, residues 326–381 (GWMNSNYRKAFLSAFRCEQRLDAIHSEVSVTFKAKKNLEVRKNSGPNDSFTEATNV) are cytoplasmic. Cys342 carries the S-palmitoyl cysteine lipid modification.

The protein belongs to the G-protein coupled receptor 1 family.

The protein localises to the cell membrane. Receptor for neuropeptide Y and peptide YY. The protein is Neuropeptide Y receptor type 2 (NPY2R) of Macaca mulatta (Rhesus macaque).